A 386-amino-acid chain; its full sequence is Outer membrane protein assembly factor BamB (386 aa).

The first 25 residues, 1–25 (MMRNSRPGRAWRGAVVLTGLLALSG), serve as a signal peptide directing secretion. Residue cysteine 26 is the site of N-palmitoyl cysteine attachment. The S-diacylglycerol cysteine moiety is linked to residue cysteine 26.

This sequence belongs to the BamB family. As to quaternary structure, part of the Bam complex.

The protein resides in the cell outer membrane. Part of the outer membrane protein assembly complex, which is involved in assembly and insertion of beta-barrel proteins into the outer membrane. The chain is Outer membrane protein assembly factor BamB from Bordetella pertussis (strain Tohama I / ATCC BAA-589 / NCTC 13251).